The sequence spans 291 residues: tRNA N(3)-cytidine methyltransferase METTL8, mitochondrial (291 aa).

The N-terminal 21 residues, 1–21 (MNMIWRNSISCLRLGKVPHRY), are a transit peptide targeting the mitochondrion. Residue Lys-80 forms a Glycyl lysine isopeptide (Lys-Gly) (interchain with G-Cter in SUMO) linkage. Residues Trp-89 and Tyr-93 each contribute to the S-adenosyl-L-methionine site. The interval 141 to 187 (FSRMHCPTVPDEKNHYEKSSGSSEGQSKTESDFSNLDSEKHKKGPME) is disordered. Residues 159–168 (SSGSSEGQSK) show a composition bias toward low complexity. Positions 204, 230, and 256 each coordinate S-adenosyl-L-methionine.

The protein belongs to the methyltransferase superfamily. METL family. As to quaternary structure, interacts with EP300.

It localises to the mitochondrion. The enzyme catalyses cytidine(32) in tRNA(Ser) + S-adenosyl-L-methionine = N(3)-methylcytidine(32) in tRNA(Ser) + S-adenosyl-L-homocysteine + H(+). The catalysed reaction is cytidine(32) in tRNA(Thr) + S-adenosyl-L-methionine = N(3)-methylcytidine(32) in tRNA(Thr) + S-adenosyl-L-homocysteine + H(+). It carries out the reaction a cytidine in mRNA + S-adenosyl-L-methionine = an N(3)-methylcytidine in mRNA + S-adenosyl-L-homocysteine + H(+). Functionally, mitochondrial S-adenosyl-L-methionine-dependent methyltransferase that mediates N(3)-methylcytidine modification of residue 32 of the tRNA anticodon loop of mitochondrial tRNA(Ser)(UCN) and tRNA(Thr). N(3)-methylcytidine methylation modification regulates mitochondrial translation efficiency and is required for activity of the respiratory chain. N(3)-methylcytidine methylation of mitochondrial tRNA(Ser)(UCN) requires the formation of N(6)-dimethylallyladenosine(37) (i6A37) by TRIT1 as prerequisite. May also mediate N(3)-methylcytidine modification of mRNAs. The existence of N(3)-methylcytidine modification on mRNAs is however unclear, and additional evidences are required to confirm the role of the N(3)-methylcytidine-specific mRNA methyltransferase activity of METTL8 in vivo. This Homo sapiens (Human) protein is tRNA N(3)-cytidine methyltransferase METTL8, mitochondrial.